Here is a 505-residue protein sequence, read N- to C-terminus: Glutamate--tRNA ligase (505 aa).

The short motif at 16–26 (PSPTGFPHVGT) is the 'HIGH' region element. Residues 257–261 (KLSKR) carry the 'KMSKS' region motif. Position 260 (Lys260) interacts with ATP.

Belongs to the class-I aminoacyl-tRNA synthetase family. Glutamate--tRNA ligase type 1 subfamily. In terms of assembly, monomer.

It localises to the cytoplasm. The enzyme catalyses tRNA(Glu) + L-glutamate + ATP = L-glutamyl-tRNA(Glu) + AMP + diphosphate. Its function is as follows. Catalyzes the attachment of glutamate to tRNA(Glu) in a two-step reaction: glutamate is first activated by ATP to form Glu-AMP and then transferred to the acceptor end of tRNA(Glu). This chain is Glutamate--tRNA ligase, found in Psychrobacter sp. (strain PRwf-1).